We begin with the raw amino-acid sequence, 1106 residues long: Inversin (1106 aa).

ANK repeat units follow at residues 13–42, 47–76, 80–110, 113–144, 148–177, 181–213, 220–250, 254–285, 288–317, 321–350, 356–385, 389–418, 422–451, 455–484, 488–517, and 523–553; these read SLAS…ELKD, FGRT…DVNR, SRRT…WMQK, EGMT…EVDT, NKQT…NIGI, EGKI…TESL, EGRT…NVTS, LFRT…TIPS, QGAT…VKDD, EGRT…DIDI, YAGT…QVDA, MKHT…RVDL, DGHS…NPNV, AGRT…DPNI, EGRT…FPNH, and ERYT…SIAA. The short motif at 490-498 is the D-box 1 element; it reads RTALHWLCN. The region spanning 555 to 584 is the IQ 1 domain; the sequence is QDIAAFKIQAVYKGYKVRKAFQERKNLLMK. Over residues 589–607 the composition is skewed to basic and acidic residues; that stretch reads RKDAAAKKREEESKRKEAS. Disordered stretches follow at residues 589–615, 636–688, 746–782, and 809–833; these read RKDA…MQNM, LQLS…ELQS, ANGT…GNRG, and AVPK…CSPA. 2 stretches are compositionally biased toward polar residues: residues 636–645 and 653–666; these read LQLSNKQTDL and VSAS…NSRG. A compositionally biased stretch (basic residues) spans 812–822; it reads KSKRHQQKSRH. The D-box 2 motif lies at 944–952; the sequence is RKELFRKKN. The 30-residue stretch at 951–980 folds into the IQ 2 domain; the sequence is KNYAATVIQRTWRSYRLRQELSQLLSAKRQ.

As to quaternary structure, binds calmodulin via its IQ domains. Interacts with APC2.

It is found in the cytoplasm. Its subcellular location is the cytoskeleton. In terms of biological role, required for normal renal development and establishment of left-right axis. Probably acts as a molecular switch between different Wnt signaling pathways. Inhibits the canonical Wnt pathway by targeting cytoplasmic disheveled for degradation by the ubiquitin-proteasome. This suggests that it is required in renal development to oppose the repression of terminal differentiation of tubular epithelial cells by Wnt signaling. This is Inversin (INVS) from Gallus gallus (Chicken).